Here is an 87-residue protein sequence, read N- to C-terminus: U3-theraphotoxin-Hhn1a 7 (87 aa).

The signal sequence occupies residues 1–24; sequence MVNMKASMFLTFAGLVLLFVVSYA. The propeptide occupies 25-52; it reads SESEEKEFPKEMLSSIFAVDNDFKQEER. Disulfide bonds link cysteine 54–cysteine 67, cysteine 61–cysteine 72, and cysteine 66–cysteine 79.

Belongs to the neurotoxin 10 (Hwtx-1) family. 51 (Hntx-8) subfamily. Hntx-8 sub-subfamily. As to expression, expressed by the venom gland.

Its subcellular location is the secreted. Ion channel inhibitor. This is U3-theraphotoxin-Hhn1a 7 from Cyriopagopus hainanus (Chinese bird spider).